The following is a 249-amino-acid chain: Transmembrane protein 150C (249 aa).

At 1-9 (MDGKKCSVW) the chain is on the cytoplasmic side. The helical transmembrane segment at 10–30 (MFLPLVFTLFTSAGLWIVYFI) threads the bilayer. Residues 31-64 (AVEDDKILPLNSAARKSGVKHAPYISFAGDDPPA) lie on the Extracellular side of the membrane. Residues 65 to 85 (SCVFSQVMNMAAFLALVVAVL) traverse the membrane as a helical segment. The Cytoplasmic portion of the chain corresponds to 86-97 (RFIQLKPKVLNP). A helical membrane pass occupies residues 98–118 (WLNISGLVALCLASFGMTLLG). Over 119 to 130 (NFQLTNDEEIHN) the chain is Extracellular. Residues 131–151 (VGTSLTFGFGTLTCWIQAALT) form a helical membrane-spanning segment. The Cytoplasmic portion of the chain corresponds to 152–168 (LKVNIKNEGRRAGIPRV). A helical membrane pass occupies residues 169–189 (ILSAVITLCVVLYFILMAQDI). Over 190–192 (HMY) the chain is Extracellular. The helical transmembrane segment at 193-213 (AARVQWGLVMCFLAYFGTLAV) threads the bilayer. The Cytoplasmic portion of the chain corresponds to 214 to 249 (EFRHYRYEIVCSEYQENFLSFSESLSEASEYQTDQV).

The protein belongs to the DRAM/TMEM150 family.

It is found in the cell membrane. The protein localises to the lysosome membrane. It catalyses the reaction Ca(2+)(in) = Ca(2+)(out). The enzyme catalyses Na(+)(in) = Na(+)(out). It carries out the reaction K(+)(in) = K(+)(out). The catalysed reaction is Mg(2+)(in) = Mg(2+)(out). Functionally, nonselective cationic channel with high permeability to Ca(2+). Component of a mechanosensitive cation channel. Confers mechanically activated (MA) currents with slow inactivation kinetics. May contribute to proprioception. The chain is Transmembrane protein 150C (Tmem150c) from Rattus norvegicus (Rat).